Here is a 513-residue protein sequence, read N- to C-terminus: Glutamyl-tRNA(Gln) amidotransferase subunit B, mitochondrial (513 aa).

Belongs to the GatB/GatE family. GatB subfamily. In terms of assembly, subunit of the heterotrimeric GatFAB amidotransferase (AdT) complex, composed of A, B and F subunits.

It localises to the mitochondrion. The enzyme catalyses L-glutamyl-tRNA(Gln) + L-glutamine + ATP + H2O = L-glutaminyl-tRNA(Gln) + L-glutamate + ADP + phosphate + H(+). Allows the formation of correctly charged Gln-tRNA(Gln) through the transamidation of misacylated Glu-tRNA(Gln) in the mitochondria. The reaction takes place in the presence of glutamine and ATP through an activated gamma-phospho-Glu-tRNA(Gln). This chain is Glutamyl-tRNA(Gln) amidotransferase subunit B, mitochondrial, found in Debaryomyces hansenii (strain ATCC 36239 / CBS 767 / BCRC 21394 / JCM 1990 / NBRC 0083 / IGC 2968) (Yeast).